The sequence spans 297 residues: Probable endonuclease 4 (297 aa).

Positions 69, 110, 145, 179, 182, 214, 227, 229, and 259 each coordinate Zn(2+).

This sequence belongs to the AP endonuclease 2 family. The cofactor is Zn(2+).

The enzyme catalyses Endonucleolytic cleavage to 5'-phosphooligonucleotide end-products.. In terms of biological role, endonuclease IV plays a role in DNA repair. It cleaves phosphodiester bonds at apurinic or apyrimidinic (AP) sites, generating a 3'-hydroxyl group and a 5'-terminal sugar phosphate. The protein is Probable endonuclease 4 of Listeria monocytogenes serotype 4b (strain CLIP80459).